Consider the following 469-residue polypeptide: Fe(3+)-Zn(2+) purple acid phosphatase 12 (469 aa).

The signal sequence occupies residues 1–28; sequence MSSRSDLKIKRVSLIIFLLSVLVEFCYG. N-linked (GlcNAc...) asparagine glycosylation is present at asparagine 114. Aspartate 168 provides a ligand contact to Fe cation. Asparagine 176 carries an N-linked (GlcNAc...) asparagine glycan. Positions 197 and 200 each coordinate Fe cation. Zn(2+) is bound at residue aspartate 197. Asparagine 234 contacts Zn(2+). Asparagine 234 provides a ligand contact to substrate. N-linked (GlcNAc...) asparagine glycosylation is present at asparagine 307. Histidine 319 lines the Zn(2+) pocket. The active-site Proton donor is the histidine 329. Histidine 356 contributes to the Zn(2+) binding site. A substrate-binding site is contributed by 356 to 358; it reads HVH. Histidine 358 provides a ligand contact to Fe cation. N-linked (GlcNAc...) asparagine glycosylation occurs at asparagine 429.

Belongs to the metallophosphoesterase superfamily. Purple acid phosphatase family. Homodimer; disulfide-linked. Fe cation serves as cofactor. It depends on Zn(2+) as a cofactor. Expressed in roots, stems, leaves, flowers and siliques.

Its subcellular location is the secreted. It carries out the reaction a phosphate monoester + H2O = an alcohol + phosphate. This chain is Fe(3+)-Zn(2+) purple acid phosphatase 12 (PAP12), found in Arabidopsis thaliana (Mouse-ear cress).